Reading from the N-terminus, the 85-residue chain is Large ribosomal subunit protein bL27 (85 aa).

Residues 1–21 (MAHKKGQGSTQNNRDSAGRRL) are disordered.

It belongs to the bacterial ribosomal protein bL27 family.

The chain is Large ribosomal subunit protein bL27 from Nitratiruptor sp. (strain SB155-2).